The chain runs to 116 residues: Cystatin (116 aa).

The Secondary area of contact signature appears at 53 to 57; that stretch reads QLVSG. Disulfide bonds link Cys71-Cys81 and Cys95-Cys115. Ser80 carries the phosphoserine modification.

Belongs to the cystatin family.

Its subcellular location is the secreted. Functionally, this protein binds tightly to and inhibits papain and cathepsin B. The sequence is that of Cystatin from Coturnix japonica (Japanese quail).